Here is a 429-residue protein sequence, read N- to C-terminus: Serine hydroxymethyltransferase (429 aa).

(6S)-5,6,7,8-tetrahydrofolate is bound by residues Leu126 and 130-132; that span reads GHL. Lys235 is subject to N6-(pyridoxal phosphate)lysine.

This sequence belongs to the SHMT family. In terms of assembly, homodimer. It depends on pyridoxal 5'-phosphate as a cofactor.

The protein resides in the cytoplasm. The enzyme catalyses (6R)-5,10-methylene-5,6,7,8-tetrahydrofolate + glycine + H2O = (6S)-5,6,7,8-tetrahydrofolate + L-serine. It functions in the pathway one-carbon metabolism; tetrahydrofolate interconversion. It participates in amino-acid biosynthesis; glycine biosynthesis; glycine from L-serine: step 1/1. In terms of biological role, catalyzes the reversible interconversion of serine and glycine with tetrahydrofolate (THF) serving as the one-carbon carrier. This reaction serves as the major source of one-carbon groups required for the biosynthesis of purines, thymidylate, methionine, and other important biomolecules. Also exhibits THF-independent aldolase activity toward beta-hydroxyamino acids, producing glycine and aldehydes, via a retro-aldol mechanism. This is Serine hydroxymethyltransferase from Zymomonas mobilis subsp. mobilis (strain ATCC 31821 / ZM4 / CP4).